The chain runs to 299 residues: Probable lipid kinase YegS (299 aa).

The 132-residue stretch at 2 to 133 folds into the DAGKc domain; sequence AEFPASLLIL…IDMAQVNKQT (132 aa). ATP is bound by residues T40, 66 to 72, and T95; that span reads GDGTINE. 3 residues coordinate Mg(2+): L215, D218, and L220. Catalysis depends on E271, which acts as the Proton acceptor.

This sequence belongs to the diacylglycerol/lipid kinase family. YegS lipid kinase subfamily. Mg(2+) is required as a cofactor. Requires Ca(2+) as cofactor.

The protein localises to the cytoplasm. Its function is as follows. Probably phosphorylates lipids; the in vivo substrate is unknown. This is Probable lipid kinase YegS from Shigella flexneri.